Here is a 367-residue protein sequence, read N- to C-terminus: Putative 12-oxophytodienoate reductase 11 (367 aa).

FMN contacts are provided by residues 26–28 (PLT), Ala-59, and Gln-101. Position 178–181 (178–181 (HGAH)) interacts with substrate. Catalysis depends on Tyr-183, which acts as the Proton donor. FMN is bound at residue Arg-230. Position 270 (Arg-270) interacts with substrate. Residues Gly-300 and 321–322 (GR) each bind FMN.

This sequence belongs to the NADH:flavin oxidoreductase/NADH oxidase family. The cofactor is FMN.

Putative oxophytodienoate reductase that may be involved in the biosynthesis or metabolism of oxylipin signaling molecules. The protein is Putative 12-oxophytodienoate reductase 11 (OPR11) of Oryza sativa subsp. japonica (Rice).